Reading from the N-terminus, the 531-residue chain is CCA tRNA nucleotidyltransferase, mitochondrial (531 aa).

The protein belongs to the tRNA nucleotidyltransferase/poly(A) polymerase family.

The protein localises to the mitochondrion. Its subcellular location is the cytoplasm. The protein resides in the nucleus. It catalyses the reaction a tRNA precursor + 2 CTP + ATP = a tRNA with a 3' CCA end + 3 diphosphate. Functionally, nucleotidyltransferase that catalyzes the addition and repair of the essential 3'-terminal CCA sequence in tRNAs, which is necessary for the attachment of amino acids to the 3' terminus of tRNA molecules, using CTP and ATP as substrates. tRNA 3'-terminal CCA addition is required both for tRNA processing and repair. Also involved in tRNA surveillance by mediating tandem CCA addition to generate a CCACCA at the 3' terminus of unstable tRNAs. While stable tRNAs receive only 3'-terminal CCA, unstable tRNAs are marked with CCACCA and rapidly degraded. The structural flexibility of RNA controls the choice between CCA versus CCACCA addition: following the first CCA addition cycle, nucleotide-binding to the active site triggers a clockwise screw motion, producing torque on the RNA. This ejects stable RNAs, whereas unstable RNAs are refolded while bound to the enzyme and subjected to a second CCA catalytic cycle. This Candida glabrata (strain ATCC 2001 / BCRC 20586 / JCM 3761 / NBRC 0622 / NRRL Y-65 / CBS 138) (Yeast) protein is CCA tRNA nucleotidyltransferase, mitochondrial (CCA1).